The sequence spans 123 residues: Late histone H2B.L3 (123 aa).

A compositionally biased stretch (low complexity) spans 1 to 10; sequence MPAKAQAAGK. The interval 1–32 is disordered; sequence MPAKAQAAGKKGSKKAKAPKPSGDKKRRRKRK. An O-linked (GlcNAc) serine glycan is attached at serine 110. Residue lysine 118 forms a Glycyl lysine isopeptide (Lys-Gly) (interchain with G-Cter in ubiquitin) linkage.

This sequence belongs to the histone H2B family. As to quaternary structure, the nucleosome is a histone octamer containing two molecules each of H2A, H2B, H3 and H4 assembled in one H3-H4 heterotetramer and two H2A-H2B heterodimers. The octamer wraps approximately 147 bp of DNA. Monoubiquitination of Lys-118 gives a specific tag for epigenetic transcriptional activation and is also prerequisite for histone H3 'Lys-4' and 'Lys-79' methylation. In terms of processing, glcNAcylation at Ser-110 promotes monoubiquitination of Lys-118. It fluctuates in response to extracellular glucose, and associates with transcribed genes.

It is found in the nucleus. Its subcellular location is the chromosome. Functionally, core component of nucleosome. Nucleosomes wrap and compact DNA into chromatin, limiting DNA accessibility to the cellular machineries which require DNA as a template. Histones thereby play a central role in transcription regulation, DNA repair, DNA replication and chromosomal stability. DNA accessibility is regulated via a complex set of post-translational modifications of histones, also called histone code, and nucleosome remodeling. The protein is Late histone H2B.L3 of Strongylocentrotus purpuratus (Purple sea urchin).